A 430-amino-acid chain; its full sequence is L-cysteine:1D-myo-inositol 2-amino-2-deoxy-alpha-D-glucopyranoside ligase (430 aa).

C48 provides a ligand contact to Zn(2+). L-cysteinyl-5'-AMP-binding positions include 48–51 (CGIT), T63, and 86–88 (NIT). The short motif at 50 to 60 (ITPYDSTHLGH) is the 'HIGH' region element. The 'ERGGDP' region signature appears at 192–197 (ERGGDP). W232 lines the L-cysteinyl-5'-AMP pocket. C236 is a Zn(2+) binding site. 254 to 256 (GSD) is a binding site for L-cysteinyl-5'-AMP. H261 is a binding site for Zn(2+). I288 is an L-cysteinyl-5'-AMP binding site. The 'KMSKS' region motif lies at 294-298 (KMSKS).

It belongs to the class-I aminoacyl-tRNA synthetase family. MshC subfamily. As to quaternary structure, monomer. Zn(2+) is required as a cofactor.

It catalyses the reaction 1D-myo-inositol 2-amino-2-deoxy-alpha-D-glucopyranoside + L-cysteine + ATP = 1D-myo-inositol 2-(L-cysteinylamino)-2-deoxy-alpha-D-glucopyranoside + AMP + diphosphate + H(+). Functionally, catalyzes the ATP-dependent condensation of GlcN-Ins and L-cysteine to form L-Cys-GlcN-Ins. The polypeptide is L-cysteine:1D-myo-inositol 2-amino-2-deoxy-alpha-D-glucopyranoside ligase (mshC) (Corynebacterium efficiens (strain DSM 44549 / YS-314 / AJ 12310 / JCM 11189 / NBRC 100395)).